The following is a 147-amino-acid chain: Large ribosomal subunit protein uL15 (147 aa).

A disordered region spans residues 1–58 (MKLFELKPAPGAKKRPKRVGRGESSGHGKTSTRGHKGQWARSGGGVRPGFEGGQMPLT). The span at 42 to 52 (SGGGVRPGFEG) shows a compositional bias: gly residues.

Belongs to the universal ribosomal protein uL15 family. Part of the 50S ribosomal subunit.

Binds to the 23S rRNA. This Caldicellulosiruptor saccharolyticus (strain ATCC 43494 / DSM 8903 / Tp8T 6331) protein is Large ribosomal subunit protein uL15.